Here is a 353-residue protein sequence, read N- to C-terminus: Photosystem II protein D1 (353 aa).

Position 2 is an N-acetylthreonine (Thr-2). At Thr-2 the chain carries Phosphothreonine. Helical transmembrane passes span 29 to 46, 118 to 133, and 142 to 156; these read YIGW…TATS, HFLL…EWEL, and WIAV…AATA. Residue His-118 participates in chlorophyll a binding. A pheophytin a-binding site is contributed by Tyr-126. Residues Asp-170 and Glu-189 each contribute to the [CaMn4O5] cluster site. The chain crosses the membrane as a helical span at residues 197–218; it reads FHMLGVAGVFGGSLFSAMHGSL. His-198 contributes to the chlorophyll a binding site. Residues His-215 and 264–265 each bind a quinone; that span reads SF. His-215 contributes to the Fe cation binding site. Position 272 (His-272) interacts with Fe cation. A helical transmembrane segment spans residues 274 to 288; the sequence is FLAAWPVVGIWFTAL. Residues His-332, Glu-333, Asp-342, and Ala-344 each coordinate [CaMn4O5] cluster. A propeptide spanning residues 345 to 353 is cleaved from the precursor; it reads VVEAPSTNG.

It belongs to the reaction center PufL/M/PsbA/D family. PSII is composed of 1 copy each of membrane proteins PsbA, PsbB, PsbC, PsbD, PsbE, PsbF, PsbH, PsbI, PsbJ, PsbK, PsbL, PsbM, PsbT, PsbX, PsbY, PsbZ, Psb30/Ycf12, at least 3 peripheral proteins of the oxygen-evolving complex and a large number of cofactors. It forms dimeric complexes. The D1/D2 heterodimer binds P680, chlorophylls that are the primary electron donor of PSII, and subsequent electron acceptors. It shares a non-heme iron and each subunit binds pheophytin, quinone, additional chlorophylls, carotenoids and lipids. D1 provides most of the ligands for the Mn4-Ca-O5 cluster of the oxygen-evolving complex (OEC). There is also a Cl(-1) ion associated with D1 and D2, which is required for oxygen evolution. The PSII complex binds additional chlorophylls, carotenoids and specific lipids. serves as cofactor. Post-translationally, tyr-161 forms a radical intermediate that is referred to as redox-active TyrZ, YZ or Y-Z. C-terminally processed by CTPA; processing is essential to allow assembly of the oxygen-evolving complex and thus photosynthetic growth.

It localises to the plastid. It is found in the chloroplast thylakoid membrane. It catalyses the reaction 2 a plastoquinone + 4 hnu + 2 H2O = 2 a plastoquinol + O2. Functionally, photosystem II (PSII) is a light-driven water:plastoquinone oxidoreductase that uses light energy to abstract electrons from H(2)O, generating O(2) and a proton gradient subsequently used for ATP formation. It consists of a core antenna complex that captures photons, and an electron transfer chain that converts photonic excitation into a charge separation. The D1/D2 (PsbA/PsbD) reaction center heterodimer binds P680, the primary electron donor of PSII as well as several subsequent electron acceptors. In Aethionema grandiflorum (Persian stone-cress), this protein is Photosystem II protein D1.